The primary structure comprises 473 residues: Photosystem II CP43 reaction center protein (473 aa).

The propeptide occupies 1 to 14; that stretch reads MKTLYSLRRFYPVE. Thr15 carries the N-acetylthreonine modification. A Phosphothreonine modification is found at Thr15. The next 5 helical transmembrane spans lie at 69-93, 134-155, 178-200, 255-275, and 291-312; these read LFEV…PHLA, LLGP…KDRN, KALY…RKIT, KPFA…LSYS, and WFNN…ASQA. Residue Glu367 coordinates [CaMn4O5] cluster. The helical transmembrane segment at 447–471 threads the bilayer; the sequence is RARAAAAGFEKGIDRDFEPVLSMTP.

Belongs to the PsbB/PsbC family. PsbC subfamily. As to quaternary structure, PSII is composed of 1 copy each of membrane proteins PsbA, PsbB, PsbC, PsbD, PsbE, PsbF, PsbH, PsbI, PsbJ, PsbK, PsbL, PsbM, PsbT, PsbX, PsbY, PsbZ, Psb30/Ycf12, at least 3 peripheral proteins of the oxygen-evolving complex and a large number of cofactors. It forms dimeric complexes. Binds multiple chlorophylls and provides some of the ligands for the Ca-4Mn-5O cluster of the oxygen-evolving complex. It may also provide a ligand for a Cl- that is required for oxygen evolution. PSII binds additional chlorophylls, carotenoids and specific lipids. is required as a cofactor.

The protein resides in the plastid. It is found in the chloroplast thylakoid membrane. Its function is as follows. One of the components of the core complex of photosystem II (PSII). It binds chlorophyll and helps catalyze the primary light-induced photochemical processes of PSII. PSII is a light-driven water:plastoquinone oxidoreductase, using light energy to abstract electrons from H(2)O, generating O(2) and a proton gradient subsequently used for ATP formation. In Panax ginseng (Korean ginseng), this protein is Photosystem II CP43 reaction center protein.